The chain runs to 176 residues: Translation initiation factor IF-3 (176 aa).

It belongs to the IF-3 family. In terms of assembly, monomer.

It is found in the cytoplasm. IF-3 binds to the 30S ribosomal subunit and shifts the equilibrium between 70S ribosomes and their 50S and 30S subunits in favor of the free subunits, thus enhancing the availability of 30S subunits on which protein synthesis initiation begins. This chain is Translation initiation factor IF-3, found in Streptococcus mutans serotype c (strain ATCC 700610 / UA159).